A 252-amino-acid polypeptide reads, in one-letter code: MNNDNLHDKLTIWRQQQIELKGMLQLIPKFQSLNEIRYVVGLDISFDKSSPKAVSALVIYDLEQRMIIYKDYLCIEKLEEDYVPGFLSFREIKWYLPLLNHIPHQFRIDIILVDGNGVLHPVGFGLACHLGVLLNLPVVGVAKNYLHCVGLTESLDAHRETLKKHVLKKTTDHPILIHSIDQSSEILGAAVWTSSNSKRPVYVSIGNQMNLEQSIQLVQKCSSSHSRVPEPIRQADIYAKFVLSQSKRNKKN.

Mg(2+) is bound by residues aspartate 43 and aspartate 114.

This sequence belongs to the endonuclease V family.

Its subcellular location is the cytoplasm. The protein localises to the nucleus. The chain is Putative endonuclease C1F12.06c from Schizosaccharomyces pombe (strain 972 / ATCC 24843) (Fission yeast).